Here is a 374-residue protein sequence, read N- to C-terminus: dTDP-3-amino-3,4,6-trideoxy-alpha-D-glucose transaminase (374 aa).

Pyridoxal 5'-phosphate contacts are provided by residues Gly-60, Gln-160, 181–186 (SFYPTK), Tyr-214, Tyr-221, 229–231 (NSR), and Tyr-316. Lys-186 is modified (N6-(pyridoxal phosphate)lysine).

This sequence belongs to the degT/dnrJ/eryC1 family. Pyridoxal 5'-phosphate serves as cofactor.

It catalyses the reaction dTDP-3-amino-3,4,6-trideoxy-alpha-D-glucose + 2-oxoglutarate = dTDP-3-dehydro-4,6-dideoxy-alpha-D-glucose + L-glutamate. It functions in the pathway antibiotic biosynthesis. Involved in the biosynthesis of the amino sugar dTDP-L-megosamine which is found in the macrolide antibiotic and antiparasitic megalomicin A. Catalyzes the reversible transfer of the amino group from L-glutamate to the C-3 position of dTDP-3-keto-4,6-deoxyglucose to yield dTDP-3-amino-3,4,6-trideoxyglucose. The polypeptide is dTDP-3-amino-3,4,6-trideoxy-alpha-D-glucose transaminase (Micromonospora megalomicea subsp. nigra).